We begin with the raw amino-acid sequence, 356 residues long: MTIDHSVTNTEQLEQQNPAIKTKLKLKKLKDQVIVITGASSGIGLVTARMAAEKGAKVVAAARNEEALKELTDELKEKGHDAIWVKADVGKEEDVNRIAETAISTFGRFDTWVNNAAVSTFGHAMDVTVEDMKRMFDTNFWGPVYGTRAAVKHYTGRGVPGALINVGSLFGDRGTVIQSTYASAKFALHGWTESIRMELEKEQAPVSVTLIHPGRIDTPYNEHAHSYLDKQPAHYRSMIYPPEAVAEAILFAAEHPKRDMYIGSQAKAIAMLGALFPRLTDRLMEKIMYHSQHAERPSNPREESALYDAGCGMHDRGTNKGWMRSRSYYTKATKRPIVSAAVVAGLVAWAAAKRCR.

Position 37-44 (37-44 (TGASSGIG)) interacts with NADP(+). Serine 168 lines the substrate pocket. The active-site Proton acceptor is tyrosine 181.

The protein belongs to the short-chain dehydrogenases/reductases (SDR) family.

This is an uncharacterized protein from Bacillus subtilis (strain 168).